The chain runs to 91 residues: Small ribosomal subunit protein uS19 (91 aa).

Belongs to the universal ribosomal protein uS19 family.

Functionally, protein S19 forms a complex with S13 that binds strongly to the 16S ribosomal RNA. The sequence is that of Small ribosomal subunit protein uS19 from Burkholderia cenocepacia (strain HI2424).